The chain runs to 810 residues: Valine--tRNA ligase (810 aa).

Positions 45 to 55 (PTISGQLHIGH) match the 'HIGH' region motif. Residues 534-538 (KMSKS) carry the 'KMSKS' region motif. Lysine 537 contacts ATP.

Belongs to the class-I aminoacyl-tRNA synthetase family. ValS type 2 subfamily. In terms of assembly, monomer.

The protein resides in the cytoplasm. It carries out the reaction tRNA(Val) + L-valine + ATP = L-valyl-tRNA(Val) + AMP + diphosphate. Functionally, catalyzes the attachment of valine to tRNA(Val). As ValRS can inadvertently accommodate and process structurally similar amino acids such as threonine, to avoid such errors, it has a 'posttransfer' editing activity that hydrolyzes mischarged Thr-tRNA(Val) in a tRNA-dependent manner. The polypeptide is Valine--tRNA ligase (Ehrlichia ruminantium (strain Welgevonden)).